The sequence spans 209 residues: CMRF35-like molecule 7 (209 aa).

The signal sequence occupies residues 1-17 (MWLSPALLLLSFPGCLS). The 103-residue stretch at 18 to 120 (IQGPALVRGP…TDRGTRVKVN (103 aa)) folds into the Ig-like V-type domain. The Extracellular portion of the chain corresponds to 18–157 (IQGPALVRGP…SSDLQKRTYY (140 aa)). Cysteine 36 and cysteine 104 are joined by a disulfide. A glycan (N-linked (GlcNAc...) asparagine) is linked at asparagine 97. Residues 158-178 (MLLVFVKVPALLILVGAVLWL) traverse the membrane as a helical segment. The Cytoplasmic segment spans residues 179 to 209 (KRSTQKVPEEQWRHTLCSDLDSELLAKDISP). Phosphoserine is present on serine 196.

The protein belongs to the CD300 family. In terms of assembly, interacts with TYROBP, which enhances cell surface expression and activation properties. May interact with HCST. In terms of processing, N-glycosylated. Expressed in myeloid cells (at protein level).

It localises to the cell membrane. Its function is as follows. Acts as an activating immune receptor in mast cells through its interaction with ITAM-bearing adapter TYROBP. The chain is CMRF35-like molecule 7 (Cd300lb) from Mus musculus (Mouse).